Here is a 130-residue protein sequence, read N- to C-terminus: Serum amyloid A-4 protein (130 aa).

An N-terminal signal peptide occupies residues 1-18 (MRLATVIVLCSLFLGVSG). A disordered region spans residues 109-130 (EEWGRSGKNPNHFRPEGLPEKF). The segment covering 121-130 (FRPEGLPEKF) has biased composition (basic and acidic residues).

It belongs to the SAA family. Apolipoprotein of the HDL complex. As to expression, expressed by the liver; secreted in plasma.

The protein resides in the secreted. Its function is as follows. Major acute phase reactant. The sequence is that of Serum amyloid A-4 protein from Mus musculus (Mouse).